Reading from the N-terminus, the 88-residue chain is Small ribosomal subunit protein uS15 (88 aa).

It belongs to the universal ribosomal protein uS15 family. In terms of assembly, part of the 30S ribosomal subunit. Forms a bridge to the 50S subunit in the 70S ribosome, contacting the 23S rRNA.

One of the primary rRNA binding proteins, it binds directly to 16S rRNA where it helps nucleate assembly of the platform of the 30S subunit by binding and bridging several RNA helices of the 16S rRNA. Functionally, forms an intersubunit bridge (bridge B4) with the 23S rRNA of the 50S subunit in the ribosome. The protein is Small ribosomal subunit protein uS15 of Finegoldia magna (strain ATCC 29328 / DSM 20472 / WAL 2508) (Peptostreptococcus magnus).